We begin with the raw amino-acid sequence, 453 residues long: Aldehyde dehydrogenase, dimeric NADP-preferring (453 aa).

Ser2 is subject to N-acetylserine. N6-acetyllysine is present on Lys178. 188–193 (GSTGVG) lines the NAD(+) pocket. Lys194 is modified (N6-acetyllysine). Active-site residues include Glu210 and Cys244.

The protein belongs to the aldehyde dehydrogenase family. As to quaternary structure, homodimer. High levels in stomach, esophagus and lung; low level in the liver and kidney.

The protein localises to the cytoplasm. The catalysed reaction is an aldehyde + NAD(+) + H2O = a carboxylate + NADH + 2 H(+). It catalyses the reaction octanal + NAD(+) + H2O = octanoate + NADH + 2 H(+). ALDHs play a major role in the detoxification of alcohol-derived acetaldehyde. They are involved in the metabolism of corticosteroids, biogenic amines, neurotransmitters, and lipid peroxidation. Oxidizes medium and long chain aldehydes into non-toxic fatty acids. Preferentially oxidizes aromatic aldehyde substrates. Comprises about 50 percent of corneal epithelial soluble proteins. May play a role in preventing corneal damage caused by ultraviolet light. This Homo sapiens (Human) protein is Aldehyde dehydrogenase, dimeric NADP-preferring (ALDH3A1).